The primary structure comprises 390 residues: 8-amino-7-oxononanoate synthase (390 aa).

Arginine 19 contributes to the substrate binding site. Position 106-107 (106-107 (GY)) interacts with pyridoxal 5'-phosphate. A substrate-binding site is contributed by histidine 131. Pyridoxal 5'-phosphate contacts are provided by serine 176, histidine 204, and threonine 233. Lysine 236 is subject to N6-(pyridoxal phosphate)lysine. Threonine 350 lines the substrate pocket.

It belongs to the class-II pyridoxal-phosphate-dependent aminotransferase family. BioF subfamily. As to quaternary structure, homodimer. It depends on pyridoxal 5'-phosphate as a cofactor.

It carries out the reaction 6-carboxyhexanoyl-[ACP] + L-alanine + H(+) = (8S)-8-amino-7-oxononanoate + holo-[ACP] + CO2. The protein operates within cofactor biosynthesis; biotin biosynthesis. Functionally, catalyzes the decarboxylative condensation of pimeloyl-[acyl-carrier protein] and L-alanine to produce 8-amino-7-oxononanoate (AON), [acyl-carrier protein], and carbon dioxide. The chain is 8-amino-7-oxononanoate synthase from Pseudomonas entomophila (strain L48).